Consider the following 246-residue polypeptide: MSVISMKQLLEAGVHFGHQTRRWNPKMKRYIFTERNGIYIIDLQKTVKKVEEAYNFTKNLAAEGGKILFVGTKKQAQDSVKEEAQRSGMYYVNQRWLGGTLTNFETIQKRIKRLKDIEKMQENGTFDVLPKKEVVQLKKELERLEKFLGGIKDMKDLPDALFIIDPRKERIAVAEARKLNIPIIGIVDTNCDPDEIDVVIPANDDAIRAVKLLTSKMADAILEAKQGEEEAEVAEETAPETETTTA.

Positions 226 to 246 (QGEEEAEVAEETAPETETTTA) are disordered. A compositionally biased stretch (acidic residues) spans 229-239 (EEAEVAEETAP).

It belongs to the universal ribosomal protein uS2 family. Part of the 30S ribosomal subunit. Interacts with BrxC.

In Bacillus subtilis (strain 168), this protein is Small ribosomal subunit protein uS2 (rpsB).